The following is a 156-amino-acid chain: ATP synthase subunit b 1 (156 aa).

Residues 7 to 29 traverse the membrane as a helical segment; the sequence is LLGQAISFALFVWFCMKYVWPPL.

Belongs to the ATPase B chain family. In terms of assembly, F-type ATPases have 2 components, F(1) - the catalytic core - and F(0) - the membrane proton channel. F(1) has five subunits: alpha(3), beta(3), gamma(1), delta(1), epsilon(1). F(0) has three main subunits: a(1), b(2) and c(10-14). The alpha and beta chains form an alternating ring which encloses part of the gamma chain. F(1) is attached to F(0) by a central stalk formed by the gamma and epsilon chains, while a peripheral stalk is formed by the delta and b chains.

It is found in the cell inner membrane. In terms of biological role, f(1)F(0) ATP synthase produces ATP from ADP in the presence of a proton or sodium gradient. F-type ATPases consist of two structural domains, F(1) containing the extramembraneous catalytic core and F(0) containing the membrane proton channel, linked together by a central stalk and a peripheral stalk. During catalysis, ATP synthesis in the catalytic domain of F(1) is coupled via a rotary mechanism of the central stalk subunits to proton translocation. Functionally, component of the F(0) channel, it forms part of the peripheral stalk, linking F(1) to F(0). In Vibrio campbellii (strain ATCC BAA-1116), this protein is ATP synthase subunit b 1.